The sequence spans 408 residues: Phosphopentomutase (408 aa).

Residues aspartate 10, aspartate 307, histidine 312, aspartate 348, histidine 349, and histidine 360 each coordinate Mn(2+).

Belongs to the phosphopentomutase family. It depends on Mn(2+) as a cofactor.

Its subcellular location is the cytoplasm. It catalyses the reaction 2-deoxy-alpha-D-ribose 1-phosphate = 2-deoxy-D-ribose 5-phosphate. The enzyme catalyses alpha-D-ribose 1-phosphate = D-ribose 5-phosphate. The protein operates within carbohydrate degradation; 2-deoxy-D-ribose 1-phosphate degradation; D-glyceraldehyde 3-phosphate and acetaldehyde from 2-deoxy-alpha-D-ribose 1-phosphate: step 1/2. In terms of biological role, isomerase that catalyzes the conversion of deoxy-ribose 1-phosphate (dRib-1-P) and ribose 1-phosphate (Rib-1-P) to deoxy-ribose 5-phosphate (dRib-5-P) and ribose 5-phosphate (Rib-5-P), respectively. The chain is Phosphopentomutase from Proteus mirabilis (strain HI4320).